We begin with the raw amino-acid sequence, 956 residues long: Translation initiation factor IF-2 (956 aa).

The interval 50-351 is disordered; that stretch reads FPADSGGAAN…APSIGGVQVP (302 aa). Residues 64 to 95 are compositionally biased toward pro residues; sequence APKPARAPKPAPKAAPAPPVEEAPAEPAPPAA. Composition is skewed to low complexity over residues 96 to 107 and 121 to 136; these read PEVVAAPEAPVA and PEAPAAERPAAQARPA. The span at 146–155 shows a compositional bias: basic and acidic residues; sequence AAEKPADTRT. 2 stretches are compositionally biased toward gly residues: residues 171-192 and 206-234; these read RPGGQGGPRPGGPRPSGGGGPR and RPGGSGAAGPRPGGTGAAGPRPGGSGQGG. Over residues 235 to 254 the composition is skewed to low complexity; the sequence is SRPSPGMMPGRSAVGRPGAP. Residues 255–320 are compositionally biased toward gly residues; the sequence is ARGGSGGPGG…GTQGAFGRAG (66 aa). Positions 324-333 are enriched in basic residues; that stretch reads VRARKSRRAK. The tr-type G domain maps to 448 to 619; it reads ARPPVVTVMG…AVLLTADAAL (172 aa). The segment at 457-464 is G1; the sequence is GHVDHGKT. 457–464 is a binding site for GTP; it reads GHVDHGKT. Residues 482 to 486 form a G2 region; sequence GITQH. The G3 stretch occupies residues 507–510; sequence DTPG. GTP contacts are provided by residues 507–511 and 561–564; these read DTPGH and NKVD. Residues 561–564 are G4; that stretch reads NKVD. Positions 597–599 are G5; sequence SAK.

It belongs to the TRAFAC class translation factor GTPase superfamily. Classic translation factor GTPase family. IF-2 subfamily.

Its subcellular location is the cytoplasm. One of the essential components for the initiation of protein synthesis. Protects formylmethionyl-tRNA from spontaneous hydrolysis and promotes its binding to the 30S ribosomal subunits. Also involved in the hydrolysis of GTP during the formation of the 70S ribosomal complex. The sequence is that of Translation initiation factor IF-2 from Beutenbergia cavernae (strain ATCC BAA-8 / DSM 12333 / CCUG 43141 / JCM 11478 / NBRC 16432 / NCIMB 13614 / HKI 0122).